The sequence spans 1377 residues: DNA-directed RNA polymerase subunit beta (1377 aa).

This sequence belongs to the RNA polymerase beta chain family. As to quaternary structure, the RNAP catalytic core consists of 2 alpha, 1 beta, 1 beta' and 1 omega subunit. When a sigma factor is associated with the core the holoenzyme is formed, which can initiate transcription.

It catalyses the reaction RNA(n) + a ribonucleoside 5'-triphosphate = RNA(n+1) + diphosphate. Functionally, DNA-dependent RNA polymerase catalyzes the transcription of DNA into RNA using the four ribonucleoside triphosphates as substrates. The sequence is that of DNA-directed RNA polymerase subunit beta from Aromatoleum aromaticum (strain DSM 19018 / LMG 30748 / EbN1) (Azoarcus sp. (strain EbN1)).